The sequence spans 921 residues: Translation initiation factor IF-2 (921 aa).

The segment at Met1–Leu296 is disordered. Positions Arg80–Gly89 are enriched in low complexity. The span at Ala117–Ala183 shows a compositional bias: basic and acidic residues. 2 stretches are compositionally biased toward low complexity: residues Pro184–Ala237 and Gly248–Gly257. In terms of domain architecture, tr-type G spans Pro417–Asp586. The interval Gly426 to Thr433 is G1. Residue Gly426–Thr433 coordinates GTP. The segment at Gly451–His455 is G2. Residues Asp474–Gly477 form a G3 region. GTP-binding positions include Asp474–His478 and Asn528–Asp531. The interval Asn528–Asp531 is G4. The segment at Ser564–Lys566 is G5.

This sequence belongs to the TRAFAC class translation factor GTPase superfamily. Classic translation factor GTPase family. IF-2 subfamily.

It localises to the cytoplasm. Its function is as follows. One of the essential components for the initiation of protein synthesis. Protects formylmethionyl-tRNA from spontaneous hydrolysis and promotes its binding to the 30S ribosomal subunits. Also involved in the hydrolysis of GTP during the formation of the 70S ribosomal complex. This is Translation initiation factor IF-2 from Bradyrhizobium sp. (strain ORS 278).